Consider the following 297-residue polypeptide: uncharacterized protein (297 aa).

The interval 175–199 is disordered; that stretch reads VLPTNRNNPVRSNVDIKPVNPPSSK. The segment covering 176–185 has biased composition (polar residues); that stretch reads LPTNRNNPVR. A glycan (N-linked (GlcNAc...) asparagine; by host) is linked at N269. Residues 277 to 297 form a helical membrane-spanning segment; that stretch reads LFGSPVLLICVASLLLLIIIL.

It belongs to the ascovirus HvAV ORF18 family.

The protein localises to the membrane. This is an uncharacterized protein from Noctuidae (owlet moths).